The sequence spans 491 residues: Probable glycine dehydrogenase (decarboxylating) subunit 2 (491 aa).

Lys273 carries the N6-(pyridoxal phosphate)lysine modification.

It belongs to the GcvP family. C-terminal subunit subfamily. In terms of assembly, the glycine cleavage system is composed of four proteins: P, T, L and H. In this organism, the P 'protein' is a heterodimer of two subunits. Pyridoxal 5'-phosphate is required as a cofactor.

The enzyme catalyses N(6)-[(R)-lipoyl]-L-lysyl-[glycine-cleavage complex H protein] + glycine + H(+) = N(6)-[(R)-S(8)-aminomethyldihydrolipoyl]-L-lysyl-[glycine-cleavage complex H protein] + CO2. In terms of biological role, the glycine cleavage system catalyzes the degradation of glycine. The P protein binds the alpha-amino group of glycine through its pyridoxal phosphate cofactor; CO(2) is released and the remaining methylamine moiety is then transferred to the lipoamide cofactor of the H protein. In Bacillus cereus (strain AH187), this protein is Probable glycine dehydrogenase (decarboxylating) subunit 2.